Reading from the N-terminus, the 149-residue chain is uncharacterized protein (149 aa).

The protein to B.subtilis XkdN.

This is an uncharacterized protein from Bacillus subtilis (strain 168).